The chain runs to 458 residues: Ribosomal protein uS12 methylthiotransferase RimO (458 aa).

The region spanning 26 to 136 (PRIGMVSLGC…VLDAVHGAVP (111 aa)) is the MTTase N-terminal domain. [4Fe-4S] cluster is bound by residues Cys-35, Cys-71, Cys-100, Cys-167, Cys-171, and Cys-174. The Radical SAM core domain occupies 153 to 389 (LTPRHYAYLK…MEKAQAISEA (237 aa)). The TRAM domain occupies 392-458 (QAKVGRTMQV…SEYDLWGKLT (67 aa)).

This sequence belongs to the methylthiotransferase family. RimO subfamily. [4Fe-4S] cluster is required as a cofactor.

Its subcellular location is the cytoplasm. The catalysed reaction is L-aspartate(89)-[ribosomal protein uS12]-hydrogen + (sulfur carrier)-SH + AH2 + 2 S-adenosyl-L-methionine = 3-methylsulfanyl-L-aspartate(89)-[ribosomal protein uS12]-hydrogen + (sulfur carrier)-H + 5'-deoxyadenosine + L-methionine + A + S-adenosyl-L-homocysteine + 2 H(+). Functionally, catalyzes the methylthiolation of an aspartic acid residue of ribosomal protein uS12. This is Ribosomal protein uS12 methylthiotransferase RimO from Jannaschia sp. (strain CCS1).